The chain runs to 52 residues: Metallothionein-2 (52 aa).

2 repeats span residues 43–47 (QTCKC) and 48–52 (QTCKC).

It belongs to the metallothionein superfamily. Type 10 family.

The metallothioneins are involved in the cellular sequestration of toxic metal ions. The sequence is that of Metallothionein-2 (MT-II) from Candida glabrata (strain ATCC 2001 / BCRC 20586 / JCM 3761 / NBRC 0622 / NRRL Y-65 / CBS 138) (Yeast).